The following is a 252-amino-acid chain: Adenosylcobinamide-GDP ribazoletransferase (252 aa).

Transmembrane regions (helical) follow at residues 4–24, 38–58, 60–80, 113–133, 141–161, 190–210, and 232–252; these read LFKG…PYVE, PIIG…INYL, ISIV…TGML, FSVI…HSFL, ILMF…ITII, LVCI…LLIV, and VAGF…CLFT.

It belongs to the CobS family. It depends on Mg(2+) as a cofactor.

It localises to the cell membrane. It catalyses the reaction alpha-ribazole + adenosylcob(III)inamide-GDP = adenosylcob(III)alamin + GMP + H(+). The enzyme catalyses alpha-ribazole 5'-phosphate + adenosylcob(III)inamide-GDP = adenosylcob(III)alamin 5'-phosphate + GMP + H(+). Its pathway is cofactor biosynthesis; adenosylcobalamin biosynthesis; adenosylcobalamin from cob(II)yrinate a,c-diamide: step 7/7. In terms of biological role, joins adenosylcobinamide-GDP and alpha-ribazole to generate adenosylcobalamin (Ado-cobalamin). Also synthesizes adenosylcobalamin 5'-phosphate from adenosylcobinamide-GDP and alpha-ribazole 5'-phosphate. This Clostridium botulinum (strain Alaska E43 / Type E3) protein is Adenosylcobinamide-GDP ribazoletransferase.